Reading from the N-terminus, the 318-residue chain is 3'-5' exoribonuclease YhaM (318 aa).

The HD domain maps to 163 to 279; sequence HVVSMLDLAK…LHYIDNLDAK (117 aa).

Belongs to the YhaM family.

Its function is as follows. Shows a 3'-5' exoribonuclease activity. This Bacillus cytotoxicus (strain DSM 22905 / CIP 110041 / 391-98 / NVH 391-98) protein is 3'-5' exoribonuclease YhaM.